The chain runs to 288 residues: Phosphatidylglycerol--prolipoprotein diacylglyceryl transferase (288 aa).

4 helical membrane-spanning segments follow: residues 18 to 38, 68 to 88, 107 to 127, and 135 to 155; these read WSLR…LACL, FFIY…VIFY, GLSS…FSWI, and LTFL…AFFI. Residue Arg-156 participates in a 1,2-diacyl-sn-glycero-3-phospho-(1'-sn-glycerol) binding. 3 consecutive transmembrane segments (helical) span residues 193–213, 222–242, and 256–276; these read VQLY…FLSY, GYVT…AEYV, and LTIG…LLII.

This sequence belongs to the Lgt family.

It localises to the cell inner membrane. The catalysed reaction is L-cysteinyl-[prolipoprotein] + a 1,2-diacyl-sn-glycero-3-phospho-(1'-sn-glycerol) = an S-1,2-diacyl-sn-glyceryl-L-cysteinyl-[prolipoprotein] + sn-glycerol 1-phosphate + H(+). It participates in protein modification; lipoprotein biosynthesis (diacylglyceryl transfer). Catalyzes the transfer of the diacylglyceryl group from phosphatidylglycerol to the sulfhydryl group of the N-terminal cysteine of a prolipoprotein, the first step in the formation of mature lipoproteins. This is Phosphatidylglycerol--prolipoprotein diacylglyceryl transferase from Chlamydia pneumoniae (Chlamydophila pneumoniae).